We begin with the raw amino-acid sequence, 171 residues long: Alpha-amylase/trypsin inhibitor CMd (171 aa).

A signal peptide spans 1 to 24 (MACKSSRSLLLLATVMVSVFAAAA).

Belongs to the protease inhibitor I6 (cereal trypsin/alpha-amylase inhibitor) family. Heterotetramer of one CMa, one CMb and two CMd chains. In terms of processing, five disulfide bonds, which are essential for the inhibitor activity, are probably present. In terms of tissue distribution, endosperm.

Its subcellular location is the secreted. Its function is as follows. Part of a complex with inhibitory activity, but CMd is inactive as a separate subunit. The polypeptide is Alpha-amylase/trypsin inhibitor CMd (IAT3) (Hordeum vulgare (Barley)).